Reading from the N-terminus, the 166-residue chain is Small ribosomal subunit protein uS5 (166 aa).

One can recognise an S5 DRBM domain in the interval 11–74 (LQEKLVQVNR…DQARRNMVKV (64 aa)).

This sequence belongs to the universal ribosomal protein uS5 family. In terms of assembly, part of the 30S ribosomal subunit. Contacts proteins S4 and S8.

With S4 and S12 plays an important role in translational accuracy. Functionally, located at the back of the 30S subunit body where it stabilizes the conformation of the head with respect to the body. The protein is Small ribosomal subunit protein uS5 of Chromohalobacter salexigens (strain ATCC BAA-138 / DSM 3043 / CIP 106854 / NCIMB 13768 / 1H11).